The chain runs to 126 residues: MAILGLGTDIVEIARIEVVIERSGERLARRILTDAEWAHYQQHQQPVRFLAKRFAVKEAAAKAFGTGIRNGLAFNQFEVFNDELGKPCLRFFAKAAELAEQMGVRHVHVTLADERRYACATVIIES.

Mg(2+) contacts are provided by Asp9 and Glu58.

It belongs to the P-Pant transferase superfamily. AcpS family. The cofactor is Mg(2+).

The protein resides in the cytoplasm. It carries out the reaction apo-[ACP] + CoA = holo-[ACP] + adenosine 3',5'-bisphosphate + H(+). In terms of biological role, transfers the 4'-phosphopantetheine moiety from coenzyme A to a Ser of acyl-carrier-protein. The protein is Holo-[acyl-carrier-protein] synthase of Pectobacterium atrosepticum (strain SCRI 1043 / ATCC BAA-672) (Erwinia carotovora subsp. atroseptica).